Here is a 342-residue protein sequence, read N- to C-terminus: S-adenosylmethionine:tRNA ribosyltransferase-isomerase (342 aa).

It belongs to the QueA family. Monomer.

It is found in the cytoplasm. The enzyme catalyses 7-aminomethyl-7-carbaguanosine(34) in tRNA + S-adenosyl-L-methionine = epoxyqueuosine(34) in tRNA + adenine + L-methionine + 2 H(+). The protein operates within tRNA modification; tRNA-queuosine biosynthesis. Functionally, transfers and isomerizes the ribose moiety from AdoMet to the 7-aminomethyl group of 7-deazaguanine (preQ1-tRNA) to give epoxyqueuosine (oQ-tRNA). The chain is S-adenosylmethionine:tRNA ribosyltransferase-isomerase from Bacillus licheniformis (strain ATCC 14580 / DSM 13 / JCM 2505 / CCUG 7422 / NBRC 12200 / NCIMB 9375 / NCTC 10341 / NRRL NRS-1264 / Gibson 46).